Consider the following 180-residue polypeptide: 2-oxoglutarate dehydrogenase, mitochondrial (180 aa).

Position 14 is an N6-succinyllysine (Lys14). Ser40 is modified (phosphoserine). Arg64 contacts thiamine diphosphate.

Belongs to the alpha-ketoglutarate dehydrogenase family. Homodimer. The 2-oxoglutarate dehydrogenase complex is composed of OGDH (2-oxoglutarate dehydrogenase; E1), DLST (dihydrolipoamide succinyltransferase; E2) and DLD (dihydrolipoamide dehydrogenase; E3). It contains multiple copies of the three enzymatic components (E1, E2 and E3). In the nucleus, the 2-oxoglutarate dehydrogenase complex associates with KAT2A. Interacts with ABHD11; this interaction maintains the functional lipoylation of the 2-oxoglutarate dehydrogenase complex. The cofactor is thiamine diphosphate. Mg(2+) is required as a cofactor.

It localises to the mitochondrion matrix. The protein localises to the nucleus. The enzyme catalyses N(6)-[(R)-lipoyl]-L-lysyl-[protein] + 2-oxoglutarate + H(+) = N(6)-[(R)-S(8)-succinyldihydrolipoyl]-L-lysyl-[protein] + CO2. With respect to regulation, calcium ions and ADP stimulate, whereas ATP and NADH reduce catalytic activity. 2-oxoglutarate dehydrogenase (E1) component of the 2-oxoglutarate dehydrogenase complex (OGDHC), which mediates the decarboxylation of alpha-ketoglutarate. The 2-oxoglutarate dehydrogenase complex catalyzes the overall conversion of 2-oxoglutarate to succinyl-CoA and CO(2). The 2-oxoglutarate dehydrogenase complex is mainly active in the mitochondrion. A fraction of the 2-oxoglutarate dehydrogenase complex also localizes in the nucleus and is required for lysine succinylation of histones: associates with KAT2A on chromatin and provides succinyl-CoA to histone succinyltransferase KAT2A. In Mesocricetus auratus (Golden hamster), this protein is 2-oxoglutarate dehydrogenase, mitochondrial.